Here is a 944-residue protein sequence, read N- to C-terminus: Lactoferrin-binding protein A (944 aa).

The signal sequence occupies residues 1–27; it reads MNKKHGFSLTLTALAIAAAFPSYAANP. Residues 52–178 enclose the TBDR plug domain; sequence RRSKEATGLG…LGGAVAFRTK (127 aa). Residues 189–944 form the TBDR beta-barrel domain; it reads SWGIQAKTAY…NFSLALEMKF (756 aa). Residues 927–944 carry the TonB C-terminal box motif; sequence GRYAAPGRNFSLALEMKF.

This sequence belongs to the TonB-dependent receptor family.

Its subcellular location is the cell outer membrane. Functionally, unknown. May be an iron-siderophore receptor. This is Lactoferrin-binding protein A (lbpA) from Neisseria meningitidis serogroup A / serotype 4A (strain DSM 15465 / Z2491).